Here is an 83-residue protein sequence, read N- to C-terminus: MSESAKLDVSDYSFEKAVAELESIVARLERGDVALDESIAIYERGEALKKHCETLLSAAENRIEKIRLDRAGKPQGTEPLDGQ.

It belongs to the XseB family. Heterooligomer composed of large and small subunits.

It localises to the cytoplasm. It carries out the reaction Exonucleolytic cleavage in either 5'- to 3'- or 3'- to 5'-direction to yield nucleoside 5'-phosphates.. Its function is as follows. Bidirectionally degrades single-stranded DNA into large acid-insoluble oligonucleotides, which are then degraded further into small acid-soluble oligonucleotides. This chain is Exodeoxyribonuclease 7 small subunit, found in Rhizobium rhizogenes (strain K84 / ATCC BAA-868) (Agrobacterium radiobacter).